The chain runs to 193 residues: Recombination protein RecR (193 aa).

Residues 61 to 76 form a C4-type zinc finger; it reads CTSCNALSESEVCEIC. The Toprim domain maps to 84-170; that stretch reads SQLCMVLHPR…TFTKIAQGVP (87 aa).

Belongs to the RecR family.

Its function is as follows. May play a role in DNA repair. It seems to be involved in an RecBC-independent recombinational process of DNA repair. It may act with RecF and RecO. The chain is Recombination protein RecR from Helicobacter pylori (strain HPAG1).